The sequence spans 401 residues: tRNA(Met) cytidine acetate ligase (401 aa).

Residues 7–20 (IVEY…HLYH), glycine 101, asparagine 160, and 185–186 (RI) each bind ATP.

The protein belongs to the TmcAL family.

The protein localises to the cytoplasm. The catalysed reaction is cytidine(34) in elongator tRNA(Met) + acetate + ATP = N(4)-acetylcytidine(34) in elongator tRNA(Met) + AMP + diphosphate. Catalyzes the formation of N(4)-acetylcytidine (ac(4)C) at the wobble position of elongator tRNA(Met), using acetate and ATP as substrates. First activates an acetate ion to form acetyladenylate (Ac-AMP) and then transfers the acetyl group to tRNA to form ac(4)C34. This is tRNA(Met) cytidine acetate ligase from Geobacillus sp. (strain WCH70).